A 251-amino-acid chain; its full sequence is Putative fatty acid elongase DDB_G0274669 (251 aa).

5 helical membrane-spanning segments follow: residues 51 to 71 (FQII…IKFL), 82 to 102 (FISI…CVGV), 135 to 155 (WSYI…IIVL), 177 to 197 (YITM…VLHV), and 211 to 231 (AFAA…KFFV).

It belongs to the ELO family.

Its subcellular location is the membrane. The catalysed reaction is a very-long-chain acyl-CoA + malonyl-CoA + H(+) = a very-long-chain 3-oxoacyl-CoA + CO2 + CoA. Could be implicated in synthesis of very long chain fatty acids. The protein is Putative fatty acid elongase DDB_G0274669 of Dictyostelium discoideum (Social amoeba).